The chain runs to 439 residues: O-fucosyltransferase 13 (439 aa).

The helical; Signal-anchor for type II membrane protein transmembrane segment at 8 to 28 (PLFVFVLTFSLLLVVILLSPS) threads the bilayer. 2 N-linked (GlcNAc...) asparagine glycosylation sites follow: N104 and N119. 238–240 (HLR) is a substrate binding site. N-linked (GlcNAc...) asparagine glycosylation is present at N293.

Belongs to the glycosyltransferase GT106 family.

The protein resides in the membrane. Its pathway is glycan metabolism. This is O-fucosyltransferase 13 from Arabidopsis thaliana (Mouse-ear cress).